Reading from the N-terminus, the 327-residue chain is Ribosomal RNA small subunit methyltransferase H (327 aa).

Residues 36–38, Asp-61, Phe-88, Asp-114, and Gln-121 each bind S-adenosyl-L-methionine; that span reads GGH.

The protein belongs to the methyltransferase superfamily. RsmH family.

The protein localises to the cytoplasm. It carries out the reaction cytidine(1402) in 16S rRNA + S-adenosyl-L-methionine = N(4)-methylcytidine(1402) in 16S rRNA + S-adenosyl-L-homocysteine + H(+). In terms of biological role, specifically methylates the N4 position of cytidine in position 1402 (C1402) of 16S rRNA. This chain is Ribosomal RNA small subunit methyltransferase H, found in Chlorobium luteolum (strain DSM 273 / BCRC 81028 / 2530) (Pelodictyon luteolum).